The sequence spans 297 residues: Urease accessory protein UreD (297 aa).

Residues 1-18 are compositionally biased toward low complexity; the sequence is MNSSAASPPAVSPHAAPS. Disordered regions lie at residues 1 to 20 and 178 to 201; these read MNSS…PSRT and VDQA…PRRR.

Belongs to the UreD family. As to quaternary structure, ureD, UreF and UreG form a complex that acts as a GTP-hydrolysis-dependent molecular chaperone, activating the urease apoprotein by helping to assemble the nickel containing metallocenter of UreC. The UreE protein probably delivers the nickel.

It localises to the cytoplasm. Required for maturation of urease via the functional incorporation of the urease nickel metallocenter. This chain is Urease accessory protein UreD, found in Parafrankia sp. (strain EAN1pec).